The sequence spans 88 residues: Small ribosomal subunit protein bS16 (88 aa).

This sequence belongs to the bacterial ribosomal protein bS16 family.

This chain is Small ribosomal subunit protein bS16, found in Leptospira interrogans serogroup Icterohaemorrhagiae serovar Lai (strain 56601).